A 150-amino-acid polypeptide reads, in one-letter code: MALKPPSATQPAPNAPATPDAPPTTGDPGASAAPGSPTTTGGPGAPAEVPQEPQEPTQTPEELAFYAPNYLCLTIFAILLFPPFGLAALYFSYEGSWTQKPTSMLPPLQTMKANQNSEWEEAYINSGRTGWFGAFVVMIGLGIIYGLVLY.

Residues 1-12 (MALKPPSATQPA) are compositionally biased toward low complexity. A disordered region spans residues 1-61 (MALKPPSATQ…EPQEPTQTPE (61 aa)). Positions 13 to 22 (PNAPATPDAP) are enriched in pro residues. Low complexity predominate over residues 23-61 (PTTGDPGASAAPGSPTTTGGPGAPAEVPQEPQEPTQTPE). 2 consecutive transmembrane segments (helical) span residues 71 to 91 (LCLT…ALYF) and 130 to 150 (GWFG…LVLY).

This sequence belongs to the CD225/Dispanin family.

The protein resides in the membrane. Its function is as follows. May play a role in spermatozoa mobility. This Homo sapiens (Human) protein is Transmembrane protein PMIS2.